The primary structure comprises 58 residues: COP9 signalosome complex subunit 6b (58 aa).

This sequence belongs to the peptidase M67A family. CSN6 subfamily. Component of the CSN complex, probably composed of CSN1, CSN2, CSN3, CSN4, CSN5 (CSN5A or CSN5B), CSN6 (CSN6A or CSN6B), CSN7 and CSN8.

It is found in the cytoplasm. It localises to the nucleus. Its function is as follows. Component of the COP9 signalosome complex (CSN), a complex involved in various cellular and developmental processes such as photomorphogenesis and auxin and jasmonate responses. The CSN complex is an essential regulator of the ubiquitin (Ubl) conjugation pathway by mediating the deneddylation of the cullin subunits of SCF-type E3 ligase complexes, leading to decrease the Ubl ligase activity of SCF. It is involved in repression of photomorphogenesis in darkness by regulating the activity of COP1-containing Ubl ligase complexes. The protein is COP9 signalosome complex subunit 6b (CSN6B) of Brassica oleracea (Wild cabbage).